Consider the following 324-residue polypeptide: tRNA-cytidine(32) 2-sulfurtransferase (324 aa).

The disordered stretch occupies residues 1–26 (MQDLIDSPTAARTPAEEKIRHEGNKL). Residues 14–26 (PAEEKIRHEGNKL) are compositionally biased toward basic and acidic residues. Residues 55 to 60 (SGGKDS) carry the PP-loop motif motif. [4Fe-4S] cluster contacts are provided by cysteine 130, cysteine 133, and cysteine 221. The tract at residues 278–310 (RPDANGDTAFDPIDPEDPREDAGDACASSPADG) is disordered.

The protein belongs to the TtcA family. As to quaternary structure, homodimer. Mg(2+) serves as cofactor. [4Fe-4S] cluster is required as a cofactor.

The protein localises to the cytoplasm. The enzyme catalyses cytidine(32) in tRNA + S-sulfanyl-L-cysteinyl-[cysteine desulfurase] + AH2 + ATP = 2-thiocytidine(32) in tRNA + L-cysteinyl-[cysteine desulfurase] + A + AMP + diphosphate + H(+). It participates in tRNA modification. Functionally, catalyzes the ATP-dependent 2-thiolation of cytidine in position 32 of tRNA, to form 2-thiocytidine (s(2)C32). The sulfur atoms are provided by the cysteine/cysteine desulfurase (IscS) system. The polypeptide is tRNA-cytidine(32) 2-sulfurtransferase (Bordetella petrii (strain ATCC BAA-461 / DSM 12804 / CCUG 43448)).